Here is a 247-residue protein sequence, read N- to C-terminus: Diglucosylglycerate octanoyltransferase (247 aa).

Belongs to the OctT acyltransferase family. Homotetramer.

The catalysed reaction is (2R)-2-O-[alpha-D-glucopyranosyl-(1-&gt;6)-alpha-D-glucopyranosyl]-glycerate + octanoyl-CoA = (2R)-2-O-[6-O-octanoyl-alpha-D-glucopyranosyl-(1-&gt;6)-alpha-D-glucopyranosyl]-glycerate + CoA. In terms of biological role, sugar octanoyltransferase likely involved in the biosynthesis of mycobacterial methylglucose lipopolysaccharide (MGLP). Catalyzes the transfer of an octanoyl group from octanoyl-CoA to the C6 OH of the second glucose in diglucosylglycerate (DGG). DGG is the preferred acceptor, but to a lesser extent, GG (glucosylglycerate) can also be used as substrate. DGG and GG are the two earliest intermediates in MGLP biosynthesis. The polypeptide is Diglucosylglycerate octanoyltransferase (Mycobacterium tuberculosis (strain ATCC 25618 / H37Rv)).